Consider the following 353-residue polypeptide: Phosphate acyltransferase (353 aa).

It belongs to the PlsX family. As to quaternary structure, homodimer. Probably interacts with PlsY.

Its subcellular location is the cytoplasm. The enzyme catalyses a fatty acyl-[ACP] + phosphate = an acyl phosphate + holo-[ACP]. The protein operates within lipid metabolism; phospholipid metabolism. In terms of biological role, catalyzes the reversible formation of acyl-phosphate (acyl-PO(4)) from acyl-[acyl-carrier-protein] (acyl-ACP). This enzyme utilizes acyl-ACP as fatty acyl donor, but not acyl-CoA. This chain is Phosphate acyltransferase, found in Myxococcus xanthus (strain DK1622).